Reading from the N-terminus, the 237-residue chain is RING-H2 finger protein ATL57 (237 aa).

The chain crosses the membrane as a helical span at residues 51 to 71; sequence ALTIFILLVALFFMGFFSVYF. The RING-type; atypical zinc finger occupies 140–182; sequence CVICLSDFEEGETVKVIPHCGHVFHVDCVDTWLSSYVTCPLCR.

This sequence belongs to the RING-type zinc finger family. ATL subfamily.

The protein localises to the membrane. The enzyme catalyses S-ubiquitinyl-[E2 ubiquitin-conjugating enzyme]-L-cysteine + [acceptor protein]-L-lysine = [E2 ubiquitin-conjugating enzyme]-L-cysteine + N(6)-ubiquitinyl-[acceptor protein]-L-lysine.. It participates in protein modification; protein ubiquitination. The chain is RING-H2 finger protein ATL57 (ATL57) from Arabidopsis thaliana (Mouse-ear cress).